The following is a 363-amino-acid chain: Protein RecA (363 aa).

77–84 contributes to the ATP binding site; it reads GPESSGKT.

The protein belongs to the RecA family.

It is found in the cytoplasm. Its function is as follows. Can catalyze the hydrolysis of ATP in the presence of single-stranded DNA, the ATP-dependent uptake of single-stranded DNA by duplex DNA, and the ATP-dependent hybridization of homologous single-stranded DNAs. It interacts with LexA causing its activation and leading to its autocatalytic cleavage. This chain is Protein RecA, found in Agrobacterium fabrum (strain C58 / ATCC 33970) (Agrobacterium tumefaciens (strain C58)).